The following is a 157-amino-acid chain: 2-C-methyl-D-erythritol 2,4-cyclodiphosphate synthase (157 aa).

The a divalent metal cation site is built by Asp-8 and His-10. 4-CDP-2-C-methyl-D-erythritol 2-phosphate contacts are provided by residues 8–10 and 34–35; these read DVH and HS. A divalent metal cation is bound at residue His-42. 4-CDP-2-C-methyl-D-erythritol 2-phosphate-binding positions include 56 to 58, 61 to 65, 100 to 106, 132 to 135, Phe-139, and Arg-142; these read DIG, FPDTD, AQAPKMA, and TTTE.

It belongs to the IspF family. As to quaternary structure, homotrimer. A divalent metal cation serves as cofactor.

The enzyme catalyses 4-CDP-2-C-methyl-D-erythritol 2-phosphate = 2-C-methyl-D-erythritol 2,4-cyclic diphosphate + CMP. It functions in the pathway isoprenoid biosynthesis; isopentenyl diphosphate biosynthesis via DXP pathway; isopentenyl diphosphate from 1-deoxy-D-xylulose 5-phosphate: step 4/6. Involved in the biosynthesis of isopentenyl diphosphate (IPP) and dimethylallyl diphosphate (DMAPP), two major building blocks of isoprenoid compounds. Catalyzes the conversion of 4-diphosphocytidyl-2-C-methyl-D-erythritol 2-phosphate (CDP-ME2P) to 2-C-methyl-D-erythritol 2,4-cyclodiphosphate (ME-CPP) with a corresponding release of cytidine 5-monophosphate (CMP). In Ectopseudomonas mendocina (strain ymp) (Pseudomonas mendocina), this protein is 2-C-methyl-D-erythritol 2,4-cyclodiphosphate synthase.